Here is a 393-residue protein sequence, read N- to C-terminus: Staphopain B (393 aa).

The signal sequence occupies residues 1-36; the sequence is MNSSYKSRVFNIISIIMVSMLILSLGAFANNNKAKA. Residues 37–219 constitute a propeptide that is removed on maturation; the sequence is DSHSKQLEIN…KVEENEAIQE (183 aa). Residues Cys243, His340, and Asn360 contribute to the active site.

This sequence belongs to the peptidase C47 family. In terms of assembly, in the cytoplasm, prematurely activated/folded SspB forms a stable non-covalent complex with SspC. Post-translationally, proteolytically cleaved by staphylococcal serine protease (SspA).

The protein resides in the secreted. With respect to regulation, prematurely activated/folded staphopain B is inhibited by staphostatin B (SspC), which is probably required to protect staphylococcal cytoplasmic proteins from degradation by SspB. In terms of biological role, cysteine protease that plays an important role in the inhibition of host innate immune response. Degrades host elastin, fibrogen, fibronectin and kininogen. Blocks phagocytosis of opsonised S.aureus by neutrophils and monocytes by inducing their death in a proteolytic activity-dependent manner. Decreases surface expression of the 'don't eat me' signal CD31 on neutrophils. Cleaves host galectin-3/LGALS3, thereby inhibiting the neutrophil-activating ability of the lectin. The protein is Staphopain B (sspB) of Staphylococcus aureus (strain Mu50 / ATCC 700699).